Consider the following 61-residue polypeptide: Small ribosomal subunit protein uS14 (61 aa).

C24, C27, C40, and C43 together coordinate Zn(2+).

Belongs to the universal ribosomal protein uS14 family. Zinc-binding uS14 subfamily. Part of the 30S ribosomal subunit. Contacts proteins S3 and S10. It depends on Zn(2+) as a cofactor.

In terms of biological role, binds 16S rRNA, required for the assembly of 30S particles and may also be responsible for determining the conformation of the 16S rRNA at the A site. The sequence is that of Small ribosomal subunit protein uS14 from Coprothermobacter proteolyticus (strain ATCC 35245 / DSM 5265 / OCM 4 / BT).